The primary structure comprises 1793 residues: uncharacterized protein (1793 aa).

Disordered regions lie at residues 156–189 (ARQA…ASSQ), 204–362 (QRES…PPKV), and 407–505 (ASFG…SGAA). The span at 166–175 (SSAQDSQELK) shows a compositional bias: polar residues. The span at 227–237 (SPKEKAQDEPS) shows a compositional bias: basic and acidic residues. Polar residues predominate over residues 238–247 (SKTPSPQNNP). Low complexity predominate over residues 248-258 (ASSQLSRSQHS). A compositionally biased stretch (basic and acidic residues) spans 277-288 (KAEEDGLSKMED). Low complexity predominate over residues 289–307 (STTSTGALATSSSSLGFES). Over residues 317-342 (AVGGEGEKISGGGGGGKGGGGGGAGD) the composition is skewed to gly residues. A compositionally biased stretch (low complexity) spans 434–450 (STTPSTNTTRTPSPTSS). A compositionally biased stretch (polar residues) spans 463-476 (DTSSTEVGSGPSDS). Residues 485–505 (PGTAPLTEPLPETPEAASGAA) show a composition bias toward low complexity. Thr-733 carries the phosphothreonine modification. Disordered stretches follow at residues 757–809 (RSES…SKFA), 829–917 (MERG…FTDG), 1090–1147 (RDIR…GSGS), 1161–1187 (QRED…NSSS), 1229–1249 (QKTP…ATKP), 1408–1465 (TGGV…KSNS), and 1482–1567 (GELL…PLPF). Composition is skewed to basic and acidic residues over residues 829–839 (MERGEVMDTSH) and 846–872 (KETE…HSEA). A compositionally biased stretch (low complexity) spans 1113-1123 (KGSGDSSDKGS). Basic and acidic residues predominate over residues 1161–1174 (QREDSMDREPRESM). Residue Ser-1187 is modified to Phosphoserine. Basic and acidic residues predominate over residues 1231–1246 (TPEKLKEEEVKEEGKA). A compositionally biased stretch (low complexity) spans 1513-1528 (SQVPSSSKGSQVSGTS). Residues 1546–1555 (PPGPQSPEHP) show a composition bias toward pro residues. Arg-1774 is modified (omega-N-methylarginine).

Expressed in muscle, heart, kidney and liver but barely detectable in lung, pancreas and brain. In liver veins, expressed in hepatic vein, extrahepatic portal vein and intrahepatic portal vein.

This is an uncharacterized protein from Homo sapiens (Human).